The following is a 512-amino-acid chain: MTSETVLEIRNVSKHFGAVKALTAVDFRLARGEVHALCGENGAGKSTLMNVIAGVLQPSEGEVLIEGAPVKIASPAVAQSLGIALVHQEIALCPDATIAENMFMAATNRRRSALMNYAQLERDAQAVMNRLAPIDVSQKVGDLPISSQQLVEIAKALTLDCRVLIFDEPTAALTETEAQVLFGIIRDLKARGISIIYISHRMAEVFSLCDRVTVFRDGRYVATEMVSDVTPDDVVRLMVGREISQLYPDKQPSSERLGEPILSVRDLGGERFRDVSFELRYGEILGVGGLIGSGRTEIAEGICALRPVTQGEIRLHDKVLRLRRYSDAAKAGVVYLSEDRKGSGVFLDLSIAQNIAALDLKALTSLGLLNSREERALAEDLTRRLGVRMGGVDMPVSSLSGGNQQKVAIAKQLAVDPKVILMDEPTRGIDVGAKSEIHRLLRELARAGIGILVISSELPELIGLCDRVLVVREGRIAGEVSGNEMTEEVIMRLASGIGPATETNLKASGHAA.

ABC transporter domains follow at residues 7–242 (LEIR…VGRE) and 257–498 (LGEP…SGIG). Residue 39–46 (GENGAGKS) coordinates ATP.

The protein belongs to the ABC transporter superfamily. Ribose importer (TC 3.A.1.2.1) family. In terms of assembly, the complex is composed of an ATP-binding protein (RbsA), two transmembrane proteins (RbsC) and a solute-binding protein (RbsB).

It is found in the cell inner membrane. It carries out the reaction D-ribose(out) + ATP + H2O = D-ribose(in) + ADP + phosphate + H(+). In terms of biological role, part of the ABC transporter complex RbsABC involved in ribose import. Responsible for energy coupling to the transport system. The protein is Ribose import ATP-binding protein RbsA 2 of Rhizobium meliloti (strain 1021) (Ensifer meliloti).